The following is a 475-amino-acid chain: Trifunctional enzyme subunit beta, mitochondrial (475 aa).

Residues 1–34 constitute a mitochondrion transit peptide; sequence MTTILTSTFRNLSTTSKWALRFSVRPLSCSSQVQ. An N6-succinyllysine modification is found at Lys53. Position 73 is an N6-acetyllysine; alternate (Lys73). Lys73 carries the post-translational modification N6-succinyllysine; alternate. Catalysis depends on Cys139, which acts as the Acyl-thioester intermediate. Residues 174 to 221 lie within the membrane without spanning it; that stretch reads IRHSRNMRKMMLDLNKAKTLAQRLSLLTKFRLNFLSPELPAVAEFSTN. Residue Lys189 is modified to N6-acetyllysine; alternate. Position 189 is an N6-succinyllysine; alternate (Lys189). An N6-succinyllysine mark is found at Lys191, Lys273, and Lys292. Lys294 is subject to N6-acetyllysine; alternate. Lys294 is subject to N6-succinyllysine; alternate. N6-acetyllysine is present on Lys299. Lys333 carries the post-translational modification N6-acetyllysine; alternate. Lys333 bears the N6-succinyllysine; alternate mark. Residues Lys349 and Lys362 each carry the N6-acetyllysine modification. Catalysis depends on Cys459, which acts as the Proton donor/acceptor.

The protein belongs to the thiolase-like superfamily. Thiolase family. Heterotetramer of 2 alpha/HADHA and 2 beta/HADHB subunits; forms the mitochondrial trifunctional enzyme. Also purified as higher order heterooligomers including a 4 alpha/HADHA and 4 beta/HADHB heterooligomer which physiological significance remains unclear. The mitochondrial trifunctional enzyme interacts with MTLN. Interacts with RSAD2/viperin.

It is found in the mitochondrion. The protein localises to the mitochondrion inner membrane. The protein resides in the mitochondrion outer membrane. It localises to the endoplasmic reticulum. It carries out the reaction an acyl-CoA + acetyl-CoA = a 3-oxoacyl-CoA + CoA. The enzyme catalyses butanoyl-CoA + acetyl-CoA = 3-oxohexanoyl-CoA + CoA. The catalysed reaction is hexanoyl-CoA + acetyl-CoA = 3-oxooctanoyl-CoA + CoA. It catalyses the reaction octanoyl-CoA + acetyl-CoA = 3-oxodecanoyl-CoA + CoA. It carries out the reaction decanoyl-CoA + acetyl-CoA = 3-oxododecanoyl-CoA + CoA. The enzyme catalyses dodecanoyl-CoA + acetyl-CoA = 3-oxotetradecanoyl-CoA + CoA. The catalysed reaction is tetradecanoyl-CoA + acetyl-CoA = 3-oxohexadecanoyl-CoA + CoA. Its pathway is lipid metabolism; fatty acid beta-oxidation. Mitochondrial trifunctional enzyme catalyzes the last three of the four reactions of the mitochondrial beta-oxidation pathway. The mitochondrial beta-oxidation pathway is the major energy-producing process in tissues and is performed through four consecutive reactions breaking down fatty acids into acetyl-CoA. Among the enzymes involved in this pathway, the trifunctional enzyme exhibits specificity for long-chain fatty acids. Mitochondrial trifunctional enzyme is a heterotetrameric complex composed of two proteins, the trifunctional enzyme subunit alpha/HADHA carries the 2,3-enoyl-CoA hydratase and the 3-hydroxyacyl-CoA dehydrogenase activities, while the trifunctional enzyme subunit beta/HADHB described here bears the 3-ketoacyl-CoA thiolase activity. This chain is Trifunctional enzyme subunit beta, mitochondrial (Hadhb), found in Rattus norvegicus (Rat).